The chain runs to 362 residues: MAFKQLLTAISIVSVANAALTRRVACPDGVNTATNAVCCSLFAVRDLIQDQLFDGGECGEEVHESLRLTFHDAIGISPTIASTGVFGGGGADGSIAIFAEIETNFHANNGVDEIIGEQAPFIQMTNMTTADFIQFAGAVGVSNCPGAPALPVFVGRPDATQPAPDKTVPEPFDTVDSILARFADAGGFSSAEVVALLASHTIAAADHVDPSIPGTPFDSTPEIFDTQFFIETQLRGILFPGTGGNQGEVESPLHGEIRLQSDSELARDSRTACEWQSFVNNQAKIQSAFKAAFRKMTILGHSESSLIECSEVIQTPPALEGNAHLPAGQTMNDIEQACATTPFPSLSADPGPATSVAPVPPS.

The N-terminal stretch at 1-18 (MAFKQLLTAISIVSVANA) is a signal peptide. A propeptide spanning residues 19–23 (ALTRR) is cleaved from the precursor. 4 disulfides stabilise this stretch: Cys-26–Cys-39, Cys-38–Cys-309, Cys-58–Cys-144, and Cys-273–Cys-338. Mn(2+) contacts are provided by Glu-60 and Glu-64. Catalysis depends on His-71, which acts as the Proton acceptor. Ca(2+) is bound by residues Asp-72, Gly-90, Asp-92, and Ser-94. An N-linked (GlcNAc...) asparagine glycan is attached at Asn-126. His-200 contacts heme b. Thr-201 serves as a coordination point for Ca(2+). Position 206 (Asp-206) interacts with Mn(2+). 4 residues coordinate Ca(2+): Asp-218, Thr-220, Ile-223, and Asp-225. Residues 341–362 (TPFPSLSADPGPATSVAPVPPS) are disordered.

This sequence belongs to the peroxidase family. Ligninase subfamily. Heme b is required as a cofactor. The cofactor is Ca(2+).

The protein resides in the secreted. It carries out the reaction 2 Mn(2+) + H2O2 + 2 H(+) = 2 Mn(3+) + 2 H2O. Catalyzes the oxidation of Mn(2+) to Mn(3+). The latter, acting as a diffusible redox mediator, is capable of oxidizing a variety of lignin compounds. This isozyme is also able to oxidize phenols and amines in the absence of Mn(2+), similar to versatile peroxidases. The polypeptide is Manganese peroxidase 3 (mnp3) (Phlebia radiata (White-rot fungus)).